We begin with the raw amino-acid sequence, 534 residues long: GPI transamidase component GPI17 (534 aa).

At 1–8 the chain is on the cytoplasmic side; that stretch reads MSNANLRK. Residues 9 to 29 form a helical membrane-spanning segment; that stretch reads WVGFCFVAIYLFLGVPLWYKL. Over 30–472 the chain is Lumenal; the sequence is TTVYRASLPI…VQQNFFPQEH (443 aa). Residues Asn100, Asn170, Asn228, Asn247, and Asn299 are each glycosylated (N-linked (GlcNAc...) asparagine). A helical membrane pass occupies residues 473 to 493; that stretch reads MIAVYLPLLGPISAVMFFGFY. Over 494–534 the chain is Cytoplasmic; it reads NVMKEKNQKSKKNGTEREVAKEKLELKEAQKLHAIDGEDEL.

It belongs to the PIGS family. Forms a complex with CDC91, GPI16, GPI8 and GAA1. Post-translationally, N-glycosylated.

It localises to the endoplasmic reticulum membrane. Its pathway is glycolipid biosynthesis; glycosylphosphatidylinositol-anchor biosynthesis. Functionally, component of the GPI transamidase complex. Involved in transfer of GPI to proteins. This chain is GPI transamidase component GPI17 (GPI17), found in Saccharomyces cerevisiae (strain ATCC 204508 / S288c) (Baker's yeast).